Consider the following 209-residue polypeptide: Large ribosomal subunit protein uL3 (209 aa).

A disordered region spans residues 130 to 154 (RGPMSHGSKFHRAVGSMGASSDPSR).

The protein belongs to the universal ribosomal protein uL3 family. In terms of assembly, part of the 50S ribosomal subunit. Forms a cluster with proteins L14 and L19.

Functionally, one of the primary rRNA binding proteins, it binds directly near the 3'-end of the 23S rRNA, where it nucleates assembly of the 50S subunit. The sequence is that of Large ribosomal subunit protein uL3 from Clostridium kluyveri (strain NBRC 12016).